The sequence spans 301 residues: Putative S-adenosyl-L-methionine-dependent methyltransferase MT0851 (301 aa).

Residues aspartate 127 and aspartate 156–leucine 157 contribute to the S-adenosyl-L-methionine site.

Belongs to the UPF0677 family.

In terms of biological role, exhibits S-adenosyl-L-methionine-dependent methyltransferase activity. The polypeptide is Putative S-adenosyl-L-methionine-dependent methyltransferase MT0851 (Mycobacterium tuberculosis (strain CDC 1551 / Oshkosh)).